The chain runs to 540 residues: Cytochrome P450 27C1 (540 aa).

Heme is bound at residue Cys486.

This sequence belongs to the cytochrome P450 family. It depends on heme as a cofactor. Following L-thyroxine, expressed in the retinal pigment epithelium (at protein level).

It is found in the membrane. It catalyses the reaction all-trans-retinol + 2 reduced [adrenodoxin] + O2 + 2 H(+) = all-trans-3,4-didehydroretinol + 2 oxidized [adrenodoxin] + 2 H2O. In terms of biological role, efficiently catalyzes the conversion of all-trans retinol (also called vitamin A1, the precursor of 11-cis retinal) to 3,4-didehydroretinol (also called vitamin A2, the precursor of 11-cis 3,4-didehydroretinal). Also acts on all-trans retinal and all-trans retinoic acid. The replacement of 11-cis retinal chromophore in photopigments with 11-cis 3,4-didehydroretinal enhances sensitivity to long-wavelength light. This may improve vision in fresh water which is often turbid. In Danio rerio (Zebrafish), this protein is Cytochrome P450 27C1 (cyp27c1).